The primary structure comprises 1183 residues: ATP-dependent helicase/nuclease subunit A (1183 aa).

One can recognise a UvrD-like helicase ATP-binding domain in the interval 3–461 (VQWTDEQQRA…IDLTKNFRSR (459 aa)). Residue 24-31 (AAAGSGKT) participates in ATP binding. The UvrD-like helicase C-terminal domain occupies 473-769 (RQVMDEAVGE…RIMTIHQSKG (297 aa)).

It belongs to the helicase family. AddA subfamily. In terms of assembly, heterodimer of AddA and AddB/RexB. Mg(2+) is required as a cofactor.

The enzyme catalyses Couples ATP hydrolysis with the unwinding of duplex DNA by translocating in the 3'-5' direction.. It carries out the reaction ATP + H2O = ADP + phosphate + H(+). Functionally, the heterodimer acts as both an ATP-dependent DNA helicase and an ATP-dependent, dual-direction single-stranded exonuclease. Recognizes the chi site generating a DNA molecule suitable for the initiation of homologous recombination. The AddA nuclease domain is required for chi fragment generation; this subunit has the helicase and 3' -&gt; 5' nuclease activities. The chain is ATP-dependent helicase/nuclease subunit A from Exiguobacterium sibiricum (strain DSM 17290 / CCUG 55495 / CIP 109462 / JCM 13490 / 255-15).